Consider the following 103-residue polypeptide: Cyclotide vitri-A (103 aa).

An N-terminal signal peptide occupies residues 1–9 (AAFALPAFA). Positions 10-69 (SFEKDVITPAALEAVLNRKAPLSNIMMENDAIVNVIANVKTVISNPVLEEALLKTNHGVN) are excised as a propeptide. The segment at residues 70–99 (GIPCGESCVWIPCITSAIGCSCKSKVCYRN) is a cross-link (cyclopeptide (Gly-Asn)). Disulfide bonds link Cys-73–Cys-89, Cys-77–Cys-91, and Cys-82–Cys-96. Residues 100–103 (SLDN) constitute a propeptide that is removed on maturation.

In terms of processing, this is a cyclic peptide.

Its function is as follows. Probably participates in a plant defense mechanism. The sequence is that of Cyclotide vitri-A from Viola biflora (Yellow wood violet).